Reading from the N-terminus, the 211-residue chain is Pyridoxine/pyridoxamine 5'-phosphate oxidase (211 aa).

Residues 8–11 and lysine 66 each bind substrate; that span reads RRDY. FMN is bound by residues 61–66, 76–77, arginine 82, lysine 83, and glutamine 105; these read RLVLLK and FT. 3 residues coordinate substrate: tyrosine 123, arginine 127, and serine 131. FMN is bound by residues 140 to 141 and tryptophan 184; that span reads QS. 190–192 provides a ligand contact to substrate; the sequence is RLH. Arginine 194 serves as a coordination point for FMN.

The protein belongs to the pyridoxamine 5'-phosphate oxidase family. Homodimer. FMN is required as a cofactor.

It carries out the reaction pyridoxamine 5'-phosphate + O2 + H2O = pyridoxal 5'-phosphate + H2O2 + NH4(+). The catalysed reaction is pyridoxine 5'-phosphate + O2 = pyridoxal 5'-phosphate + H2O2. The protein operates within cofactor metabolism; pyridoxal 5'-phosphate salvage; pyridoxal 5'-phosphate from pyridoxamine 5'-phosphate: step 1/1. It functions in the pathway cofactor metabolism; pyridoxal 5'-phosphate salvage; pyridoxal 5'-phosphate from pyridoxine 5'-phosphate: step 1/1. Its function is as follows. Catalyzes the oxidation of either pyridoxine 5'-phosphate (PNP) or pyridoxamine 5'-phosphate (PMP) into pyridoxal 5'-phosphate (PLP). The sequence is that of Pyridoxine/pyridoxamine 5'-phosphate oxidase from Thermosynechococcus vestitus (strain NIES-2133 / IAM M-273 / BP-1).